We begin with the raw amino-acid sequence, 585 residues long: Arginine--tRNA ligase (585 aa).

The 'HIGH' region signature appears at P126–H136.

Belongs to the class-I aminoacyl-tRNA synthetase family. As to quaternary structure, monomer.

Its subcellular location is the cytoplasm. It catalyses the reaction tRNA(Arg) + L-arginine + ATP = L-arginyl-tRNA(Arg) + AMP + diphosphate. This is Arginine--tRNA ligase from Trichodesmium erythraeum (strain IMS101).